A 130-amino-acid polypeptide reads, in one-letter code: Small ribosomal subunit protein eS8 (130 aa).

This sequence belongs to the eukaryotic ribosomal protein eS8 family. Part of the 30S ribosomal subunit.

The sequence is that of Small ribosomal subunit protein eS8 from Thermococcus onnurineus (strain NA1).